Reading from the N-terminus, the 357-residue chain is Actin, cytoplasmic (357 aa).

It belongs to the actin family. In terms of processing, met-1 may be removed after translation.

Its subcellular location is the cytoplasm. The protein localises to the cytoskeleton. It carries out the reaction ATP + H2O = ADP + phosphate + H(+). In terms of biological role, actins are highly conserved proteins that are involved in various types of cell motility and are ubiquitously expressed in all eukaryotic cells. The polypeptide is Actin, cytoplasmic (Oxytricha fallax).